Here is a 215-residue protein sequence, read N- to C-terminus: 3-demethoxyubiquinol 3-hydroxylase (215 aa).

The Fe cation site is built by glutamate 64, glutamate 94, histidine 97, glutamate 146, glutamate 178, and histidine 181.

The protein belongs to the COQ7 family. The cofactor is Fe cation.

The protein resides in the cell membrane. It carries out the reaction a 5-methoxy-2-methyl-3-(all-trans-polyprenyl)benzene-1,4-diol + AH2 + O2 = a 3-demethylubiquinol + A + H2O. The protein operates within cofactor biosynthesis; ubiquinone biosynthesis. In terms of biological role, catalyzes the hydroxylation of 2-nonaprenyl-3-methyl-6-methoxy-1,4-benzoquinol during ubiquinone biosynthesis. The chain is 3-demethoxyubiquinol 3-hydroxylase from Pseudomonas savastanoi pv. phaseolicola (strain 1448A / Race 6) (Pseudomonas syringae pv. phaseolicola (strain 1448A / Race 6)).